A 428-amino-acid chain; its full sequence is Type II methyltransferase M.BanI (428 aa).

Residues 3–417 (IKFVDLFAGI…EDLFQNNVNE (415 aa)) enclose the SAM-dependent MTase C5-type domain. Cys76 is an active-site residue.

This sequence belongs to the class I-like SAM-binding methyltransferase superfamily. C5-methyltransferase family. In terms of assembly, monomer.

It carries out the reaction a 2'-deoxycytidine in DNA + S-adenosyl-L-methionine = a 5-methyl-2'-deoxycytidine in DNA + S-adenosyl-L-homocysteine + H(+). Functionally, a methylase, recognizes the double-stranded sequence 5'-GGYRCC-3', methylates C-4 on both strands, and protects the DNA from cleavage by the BanI endonuclease. The chain is Type II methyltransferase M.BanI (banIM) from Aneurinibacillus aneurinilyticus (Bacillus aneurinolyticus).